Reading from the N-terminus, the 436-residue chain is Probable sodium/metabolite cotransporter BASS4, chloroplastic (436 aa).

Residues 1–47 (MAIASTLASTQNPFLCLRQPPSPGNRSVVFRRCQDPCGRRWISRSIR) constitute a chloroplast transit peptide. Helical transmembrane passes span 109-129 (FLPL…TLGC), 131-151 (ADKY…SGLT), 157-177 (IGAA…ILLL), 195-215 (LVTG…GVAL), 225-245 (LALA…PFWV), 257-277 (FPTD…LIIG), 297-314 (LFSK…WIQV), 328-348 (VFLA…AFNA), and 403-423 (PCVA…NLWL).

It belongs to the bile acid:sodium symporter (BASS) (TC 2.A.28) family.

It localises to the membrane. It is found in the plastid. The protein resides in the chloroplast envelope. May function as sodium-coupled metabolite transporter across the chloroplast envelope. The polypeptide is Probable sodium/metabolite cotransporter BASS4, chloroplastic (BASS4) (Arabidopsis thaliana (Mouse-ear cress)).